The chain runs to 182 residues: uncharacterized protein (182 aa).

The first 29 residues, Met1–Ala29, serve as a signal peptide directing secretion. Residues Trp152 to Val174 traverse the membrane as a helical segment.

Its subcellular location is the membrane. This is an uncharacterized protein from Bacillus subtilis (strain 168).